We begin with the raw amino-acid sequence, 141 residues long: Putative antirestriction protein YubI (141 aa).

The protein belongs to the antirestriction protein family.

The chain is Putative antirestriction protein YubI (yubI) from Escherichia coli (strain K12).